The chain runs to 87 residues: Virulence protein PagD (87 aa).

A signal peptide spans 1–20 (MKHHAFMLWSLLIFSFHVLA). The segment at 46–87 (QPPTNTDKKQARQISSPSCPTTKPMMSAPVNDARKGNTFSRT) is disordered. The segment covering 57 to 66 (RQISSPSCPT) has biased composition (polar residues).

In terms of biological role, putative function in virulence. Could be involved in promoting S.typhimurium survival within macrophages. This Salmonella typhimurium (strain LT2 / SGSC1412 / ATCC 700720) protein is Virulence protein PagD (pagD).